A 454-amino-acid chain; its full sequence is MPTYYLALHGGQSYNLIVDTDMSGNPSLSVIPTNPYQEQLSNNPLIQLQIVVGENTGAPAPPQPPPPPPPPPPPERRDAWTQEPLPLDMNPLGSDASQGPLASSIRMLCMAQYLLRNARGQQGLLRPLGPQTRSQVTLERQPVHNPRQEAPIILLQSPAPPRFTPVPMVALGHTLQPTPPPRPTLPQPRIPLIIPPRHTNQPATTPPTAPQRLTLGHQLSLPPHPPPHQSTPHCSSDSTGLPPPPTSYSIPSMTLSPEPLPPPAAPAHPLPGVIYDQQALPPTPGPPWWPPVRDPTPTTQTPPTNTKQGPDQGQGRGRWRGRGRSKGRGRMHKLPEPRRPGPDTSSPSMPQLSPVVSLHQGQGPENSPTPGPSTAGPVCRVTPSATPDISPIHEPESSDSEEPPFLFPSDWYPPTLEPAELDESWEGIFETTESHSSDEENVGGPSKRPRTSTQ.

2 disordered regions span residues 55–98 and 175–454; these read NTGA…DASQ and LQPT…TSTQ. Pro residues-rich tracts occupy residues 59 to 73 and 177 to 189; these read PAPP…PPPP and PTPP…PQPR. Over residues 190–203 the composition is skewed to low complexity; the sequence is IPLIIPPRHTNQPA. Composition is skewed to pro residues over residues 258 to 269 and 281 to 294; these read EPLPPPAAPAHP and PPTP…PVRD. The span at 295 to 306 shows a compositional bias: low complexity; it reads PTPTTQTPPTNT. The span at 317–332 shows a compositional bias: basic residues; the sequence is GRWRGRGRSKGRGRMH. The PXLXP motif, interaction with host ZMYND11 signature appears at 350–354; sequence PQLSP. Residues 359–368 are compositionally biased toward polar residues; it reads HQGQGPENSP. The short motif at 404-408 is the PXLXP motif, interaction with host ZMYND11 element; it reads PFLFP.

It belongs to the herpesviridae EBNA2 family. As to quaternary structure, interacts with human SMARCB1/INI1, presumably generating an open chromatin conformation at the EBNA2-responsive target genes. Interacts with human WAPL. Interacts with host CBF1; this interaction allows transcriptional activation by EBNA2. Interacts with host general transcription factors GTF2B, ERCC2 and ERCC3. Interacts (via PXLXP motif) with host ZMYND11/BS69 (via MYND-type zinc finger). Interacts with host EBF1. In terms of processing, phosphorylated.

It is found in the host nucleus matrix. Functionally, plays a key role in the activation of the host resting B-cell and stimulation of B-cell proliferation. Acts by up-regulating the expression of viral EBNA1-6, LMP1, LMP2A and LMP2B genes, as well as several host genes including CD21, CD23 and MYC. Activates transcription by acting as an adapter molecule that binds to cellular sequence-specific DNA-binding proteins such as host CBF1, SMARCB1 and SPI1. Once EBNA2 is near promoter sites, its acidic activating domain recruits basal and activation-associated transcription factors TFIIB, TAF40, TFIIH components ERCC2 and ERCC3, and CBP in order to promote transcription. Alternatively, EBNA2 can affect activities of cell cycle regulators and retard cell cycle progression at G2/M phase. It also induces chromosomal instability, by disrupting mitotic checkpoints, multi-nucleation and formation of micronuclei in infected cells. In Epstein-Barr virus (strain AG876) (HHV-4), this protein is Epstein-Barr nuclear antigen 2 (EBNA2).